Consider the following 399-residue polypeptide: Putative 8-amino-7-oxononanoate synthase (399 aa).

Arg24 lines the substrate pocket. Position 111–112 (111–112 (GW)) interacts with pyridoxal 5'-phosphate. A substrate-binding site is contributed by His141. Pyridoxal 5'-phosphate-binding positions include Ser189, 214–217 (DEAH), and 243–246 (TFSK). At Lys246 the chain carries N6-(pyridoxal phosphate)lysine. Thr360 is a binding site for substrate.

Belongs to the class-II pyridoxal-phosphate-dependent aminotransferase family. BioF subfamily. In terms of assembly, homodimer. It depends on pyridoxal 5'-phosphate as a cofactor.

It catalyses the reaction 6-carboxyhexanoyl-[ACP] + L-alanine + H(+) = (8S)-8-amino-7-oxononanoate + holo-[ACP] + CO2. It participates in cofactor biosynthesis; biotin biosynthesis. Functionally, catalyzes the decarboxylative condensation of pimeloyl-[acyl-carrier protein] and L-alanine to produce 8-amino-7-oxononanoate (AON), [acyl-carrier protein], and carbon dioxide. The polypeptide is Putative 8-amino-7-oxononanoate synthase (bioF) (Bordetella bronchiseptica (strain ATCC BAA-588 / NCTC 13252 / RB50) (Alcaligenes bronchisepticus)).